The following is a 90-amino-acid chain: Conotoxin ba9a (90 aa).

A signal peptide spans 1-27 (MHLSLARSAGLMWLLLFAVGNFVGVQP). The propeptide occupies 28 to 62 (GQITRDVDNGQLADNRRNLQSLRKPMTLFKSLNKR). E67 is modified (4-carboxyglutamate). 4-hydroxyproline is present on residues P76 and P80.

Expressed by the venom duct.

It is found in the secreted. The protein is Conotoxin ba9a of Conus bayani (Bayan's cone).